A 652-amino-acid polypeptide reads, in one-letter code: DNA ligase (652 aa).

NAD(+)-binding positions include 29–33 (DAEYD), 78–79 (SL), and Glu-107. Catalysis depends on Lys-109, which acts as the N6-AMP-lysine intermediate. NAD(+) contacts are provided by Arg-130, Glu-164, Lys-278, and Lys-302. Residues Cys-395, Cys-398, Cys-413, and Cys-418 each coordinate Zn(2+). Residues 577-652 (DENAALSGMT…IKDEAWLESL (76 aa)) enclose the BRCT domain.

Belongs to the NAD-dependent DNA ligase family. LigA subfamily. Requires Mg(2+) as cofactor. Mn(2+) is required as a cofactor.

The enzyme catalyses NAD(+) + (deoxyribonucleotide)n-3'-hydroxyl + 5'-phospho-(deoxyribonucleotide)m = (deoxyribonucleotide)n+m + AMP + beta-nicotinamide D-nucleotide.. Its function is as follows. DNA ligase that catalyzes the formation of phosphodiester linkages between 5'-phosphoryl and 3'-hydroxyl groups in double-stranded DNA using NAD as a coenzyme and as the energy source for the reaction. It is essential for DNA replication and repair of damaged DNA. The polypeptide is DNA ligase (Streptococcus suis (strain 98HAH33)).